The primary structure comprises 333 residues: Probable HTH-type transcriptional repressor ExuR (333 aa).

Residues 2 to 56 (VTIKDIAKLANVSHTTVSRALNNSPYIKEHTKKKILELAEQLNYTPNVNAKSLAM) form the HTH lacI-type domain. The H-T-H motif DNA-binding region spans 4–23 (IKDIAKLANVSHTTVSRALN).

Functionally, transcriptional repressor for the exu locus which is required for galacturonate utilization. In Bacillus subtilis (strain 168), this protein is Probable HTH-type transcriptional repressor ExuR (exuR).